A 1838-amino-acid chain; its full sequence is Collagen alpha-1(V) chain (1838 aa).

An N-terminal signal peptide occupies residues 1-37; the sequence is MDVHTRWKARSALRPGAPLLPPLLLLLLWAPPPSRAA. Residues 72-244 form the Laminin G-like domain; the sequence is DVAYRVTKDA…DYCEHYSPDC (173 aa). The interval 231–443 is nonhelical region; sequence RAAYDYCEHY…MPANQDTIYE (213 aa). Residues Y234, Y236, Y240, Y262, and Y263 each carry the sulfotyrosine modification. Disordered stretches follow at residues 242–269, 281–457, 470–520, 526–545, and 559–1574; these read PDCD…GDGE, EDPE…QKGE, PPGP…GTML, FGGG…QESQ, and GPAG…EVIQ. Residues 258-269 are compositionally biased toward acidic residues; sequence NPDEYYTEGDGE. The segment covering 285–304 has biased composition (basic and acidic residues); the sequence is DLGKEPTPSKKPVEAAKETT. The span at 309–323 shows a compositional bias: low complexity; that stretch reads ELTPTPTEAAPMPET. Residues Y338, Y340, Y346, and Y347 each carry the sulfotyrosine modification. The segment covering 377–388 has biased composition (polar residues); that stretch reads PTSTADTSNSSN. The span at 396–406 shows a compositional bias: acidic residues; it reads GADDLEGEFTE. Sulfotyrosine is present on residues Y416, Y417, Y420, and Y421. The span at 417-428 shows a compositional bias: low complexity; the sequence is YDPYYDPTSSPS. Residues 444–558 are interrupted collagenous region; sequence GIGGPRGEKG…ILQQARLALR (115 aa). A compositionally biased stretch (pro residues) spans 470–485; that stretch reads PPGPEGPAGLPGPPGT. Residues 506-520 are compositionally biased toward low complexity; sequence LPGADGLPGPPGTML. The interval 559 to 1570 is triple-helical region; that stretch reads GPAGPMGLTG…GPPGPPGPPG (1012 aa). A hydroxyproline mark is found at P570 and P576. A compositionally biased stretch (low complexity) spans 587-597; it reads DVGPQGPRGVQ. Hydroxyproline is present on P621. Residue K627 is modified to 5-hydroxylysine. P639 is modified (hydroxyproline). A 5-hydroxylysine modification is found at K642. 5 positions are modified to hydroxyproline: P648, P654, P657, P675, and P678. A compositionally biased stretch (low complexity) spans 671–686; the sequence is PRGLPGEPGPRGLLGP. Position 687 is a 5-hydroxylysine (K687). Residues 687–696 show a composition bias toward pro residues; that stretch reads KGPPGPPGPP. A hydroxyproline mark is found at P690, P696, and P705. At K708 the chain carries 5-hydroxylysine. 4 positions are modified to hydroxyproline: P717, P720, P726, and P732. Over residues 722 to 741 the composition is skewed to low complexity; that stretch reads QQGNPGAQGLPGPQGAIGPP. 5-hydroxylysine is present on K744. Low complexity predominate over residues 747–756; that stretch reads LGKPGLPGMP. 5 positions are modified to hydroxyproline: P750, P756, P762, P765, and P771. K774 carries the post-translational modification 5-hydroxylysine. A hydroxyproline mark is found at P780 and P789. A 5-hydroxylysine mark is found at K795, K804, K807, and K810. P816 carries the hydroxyproline modification. Residue K819 is modified to 5-hydroxylysine. A Hydroxyproline modification is found at P834. A compositionally biased stretch (basic and acidic residues) spans 837-846; that stretch reads RGEDGPEGPK. A 5-hydroxylysine modification is found at K846. P861 is modified (hydroxyproline). K864 is modified (5-hydroxylysine). The segment covering 867–876 has biased composition (low complexity); the sequence is LGVPGLPGYP. 3 positions are modified to hydroxyproline: P870, P873, and P876. A 5-hydroxylysine modification is found at K882. Residues P888 and P891 each carry the hydroxyproline modification. K897 is modified (5-hydroxylysine). 2 positions are modified to hydroxyproline: P903 and P906. The segment covering 908-917 has biased composition (low complexity); the sequence is PRGQRGPTGP. A hydroxyproline mark is found at P930 and P945. Composition is skewed to low complexity over residues 971–990 and 999–1011; these read KDGL…QGKT and VGPQ…TGPM. Hydroxyproline is present on residues P1017, P1020, P1023, and P1029. The segment covering 1088-1104 has biased composition (low complexity); sequence SPGERGPAGAAGPIGIP. Residues 1106-1115 show a composition bias toward pro residues; sequence RPGPQGPPGP. Residues 1116-1140 show a composition bias toward low complexity; the sequence is AGEKGAPGEKGPQGPAGRDGLQGPV. Residues P1221 and P1224 each carry the hydroxyproline modification. The segment covering 1259–1268 has biased composition (low complexity); that stretch reads PSGAPGADGP. 2 stretches are compositionally biased toward pro residues: residues 1380 to 1398 and 1454 to 1469; these read TGEP…PGPA and SPGP…PPGL. Residues P1467 and P1470 each carry the hydroxyproline modification. Residues 1485-1494 are compositionally biased toward low complexity; it reads PGLIGLIGPP. Pro residues predominate over residues 1526–1541; the sequence is PIGPPGPPGLPGPPGP. Residues 1542-1554 show a composition bias toward low complexity; that stretch reads KGAKGSSGPTGPK. A compositionally biased stretch (pro residues) spans 1560 to 1569; that stretch reads PGPPGPPGPP. The nonhelical region stretch occupies residues 1571-1605; it reads EVIQPLPIQASRTRRNIDASQLLDDGNGENYVDYA. Y1601 and Y1604 each carry sulfotyrosine. A propeptide spans 1606-1838 (C-terminal propeptide); the sequence is DGMEEIFGSL…FEVGPACFMG (233 aa). Residues 1609–1837 form the Fibrillar collagen NC1 domain; the sequence is EEIFGSLNSL…GFEVGPACFM (229 aa). 3 disulfides stabilise this stretch: C1639–C1671, C1680–C1835, and C1746–C1789. Ca(2+) contacts are provided by D1657, N1659, Q1660, C1662, and D1665.

This sequence belongs to the fibrillar collagen family. As to quaternary structure, trimers of two alpha 1(V) and one alpha 2(V) chains in most tissues and trimers of one alpha 1(V), one alpha 2(V), and one alpha 3(V) chains in placenta. Interacts with CSPG4. Prolines at the third position of the tripeptide repeating unit (G-X-Y) are hydroxylated in some or all of the chains. In terms of processing, sulfated on 40% of tyrosines.

Its subcellular location is the secreted. The protein localises to the extracellular space. It localises to the extracellular matrix. In terms of biological role, type V collagen is a member of group I collagen (fibrillar forming collagen). It is a minor connective tissue component of nearly ubiquitous distribution. Type V collagen binds to DNA, heparan sulfate, thrombospondin, heparin, and insulin. The protein is Collagen alpha-1(V) chain (COL5A1) of Homo sapiens (Human).